Here is a 441-residue protein sequence, read N- to C-terminus: Glutamyl-tRNA reductase (441 aa).

Substrate is bound by residues 58 to 61, S116, 121 to 123, and Q127; these read TCNR and EPD. C59 acts as the Nucleophile in catalysis. 195-200 serves as a coordination point for NADP(+); that stretch reads GAGMAG.

Belongs to the glutamyl-tRNA reductase family. Homodimer.

The enzyme catalyses (S)-4-amino-5-oxopentanoate + tRNA(Glu) + NADP(+) = L-glutamyl-tRNA(Glu) + NADPH + H(+). It functions in the pathway porphyrin-containing compound metabolism; protoporphyrin-IX biosynthesis; 5-aminolevulinate from L-glutamyl-tRNA(Glu): step 1/2. Its function is as follows. Catalyzes the NADPH-dependent reduction of glutamyl-tRNA(Glu) to glutamate 1-semialdehyde (GSA). This is Glutamyl-tRNA reductase from Ignicoccus hospitalis (strain KIN4/I / DSM 18386 / JCM 14125).